The chain runs to 165 residues: UPF0262 protein Sala_0765 (165 aa).

It belongs to the UPF0262 family.

The sequence is that of UPF0262 protein Sala_0765 from Sphingopyxis alaskensis (strain DSM 13593 / LMG 18877 / RB2256) (Sphingomonas alaskensis).